A 179-amino-acid polypeptide reads, in one-letter code: Gut granule loss protein 3 (179 aa).

A disordered region spans residues 40–59 (DLDSASSGVGSSTCTEEQES). Over residues 42–54 (DSASSGVGSSTCT) the composition is skewed to polar residues.

This Caenorhabditis elegans protein is Gut granule loss protein 3 (glo-3).